A 445-amino-acid polypeptide reads, in one-letter code: Phosphoglucosamine mutase (445 aa).

The Phosphoserine intermediate role is filled by Ser-101. Residues Ser-101, Asp-240, Asp-242, and Asp-244 each contribute to the Mg(2+) site. A Phosphoserine modification is found at Ser-101.

Belongs to the phosphohexose mutase family. It depends on Mg(2+) as a cofactor. Post-translationally, activated by phosphorylation.

The enzyme catalyses alpha-D-glucosamine 1-phosphate = D-glucosamine 6-phosphate. Its function is as follows. Catalyzes the conversion of glucosamine-6-phosphate to glucosamine-1-phosphate. The protein is Phosphoglucosamine mutase of Pseudomonas aeruginosa (strain UCBPP-PA14).